The chain runs to 481 residues: Protein nucleotidyltransferase YdiU (481 aa).

ATP contacts are provided by Gly-87, Gly-89, Arg-90, Lys-110, Asp-122, Gly-123, Arg-173, and Arg-180. The active-site Proton acceptor is Asp-249. Asn-250 and Asp-259 together coordinate Mg(2+). Asp-259 is an ATP binding site.

Belongs to the SELO family. The cofactor is Mg(2+). It depends on Mn(2+) as a cofactor.

The enzyme catalyses L-seryl-[protein] + ATP = 3-O-(5'-adenylyl)-L-seryl-[protein] + diphosphate. The catalysed reaction is L-threonyl-[protein] + ATP = 3-O-(5'-adenylyl)-L-threonyl-[protein] + diphosphate. It catalyses the reaction L-tyrosyl-[protein] + ATP = O-(5'-adenylyl)-L-tyrosyl-[protein] + diphosphate. It carries out the reaction L-histidyl-[protein] + UTP = N(tele)-(5'-uridylyl)-L-histidyl-[protein] + diphosphate. The enzyme catalyses L-seryl-[protein] + UTP = O-(5'-uridylyl)-L-seryl-[protein] + diphosphate. The catalysed reaction is L-tyrosyl-[protein] + UTP = O-(5'-uridylyl)-L-tyrosyl-[protein] + diphosphate. In terms of biological role, nucleotidyltransferase involved in the post-translational modification of proteins. It can catalyze the addition of adenosine monophosphate (AMP) or uridine monophosphate (UMP) to a protein, resulting in modifications known as AMPylation and UMPylation. This Mycobacterium sp. (strain KMS) protein is Protein nucleotidyltransferase YdiU.